We begin with the raw amino-acid sequence, 768 residues long: P-selectin (768 aa).

An N-terminal signal peptide occupies residues 1 to 41; sequence MAGCPKGSWKPRLRSVVLGAAQLIWLSALISELVNRKKVAT. Topologically, residues 42-709 are extracellular; sequence WTYNYSTKAY…QAGTLTIQEA (668 aa). 3 N-linked (GlcNAc...) asparagine glycosylation sites follow: asparagine 45, asparagine 54, and asparagine 107. Residues 58 to 158 form the C-type lectin domain; it reads AFCKRHFTDL…PCFKRKRALC (101 aa). Intrachain disulfides connect cysteine 60-cysteine 158, cysteine 131-cysteine 150, cysteine 168-cysteine 183, cysteine 185-cysteine 194, cysteine 200-cysteine 244, cysteine 230-cysteine 257, cysteine 262-cysteine 306, cysteine 292-cysteine 319, cysteine 324-cysteine 368, cysteine 354-cysteine 381, cysteine 386-cysteine 430, cysteine 416-cysteine 443, cysteine 448-cysteine 492, cysteine 478-cysteine 505, cysteine 510-cysteine 554, cysteine 540-cysteine 567, cysteine 580-cysteine 624, cysteine 610-cysteine 637, cysteine 642-cysteine 686, and cysteine 672-cysteine 699. Ca(2+) contacts are provided by glutamate 121, asparagine 123, and asparagine 124. Asparagine 123 contributes to the a carbohydrate binding site. Residues glutamate 133 and asparagine 146 each contribute to the a carbohydrate site. Ca(2+)-binding residues include asparagine 146 and aspartate 147. One can recognise an EGF-like domain in the interval 159–195; it reads YTASCQDMSCNSQGERIETIGSYTCSCYPGFYGPECE. Sushi domains are found at residues 198-259, 260-321, 322-383, 384-445, 446-507, 508-569, 578-639, and 640-701; these read QECG…QCKA, VQCQ…TCEA, IACE…VCEA, LQCQ…ECQA, VSCT…MCEA, IKCP…TCKG, VRCP…VCRA, and VKCS…TCQA. Asparagine 212 carries N-linked (GlcNAc...) asparagine glycosylation. Asparagine 347 is a glycosylation site (N-linked (GlcNAc...) asparagine). Residue asparagine 456 is glycosylated (N-linked (GlcNAc...) asparagine). A glycan (N-linked (GlcNAc...) asparagine) is linked at asparagine 603. Residues asparagine 654, asparagine 661, and asparagine 679 are each glycosylated (N-linked (GlcNAc...) asparagine). The chain crosses the membrane as a helical span at residues 710–733; sequence LTYLGGALASTSGLAVGGTLLALL. Topologically, residues 734–768 are cytoplasmic; sequence RKRLRKKDDGKCPLNPHSHLGTYGVFTNAAYDPTP. The S-palmitoyl cysteine; alternate moiety is linked to residue cysteine 745. The S-stearoyl cysteine; alternate moiety is linked to residue cysteine 745. The Endocytosis signal signature appears at 756–759; that stretch reads YGVF. Positions 759-768 are interaction with SNX17; the sequence is FTNAAYDPTP.

Belongs to the selectin/LECAM family. As to quaternary structure, interacts with SNX17. Interacts with SELPLG/PSGL1 and PODXL2 and mediates neutrophil adhesion and leukocyte rolling. This interaction requires the sialyl-Lewis X epitope of SELPLG and PODXL2, and specific tyrosine sulfation on SELPLG. Interacts (via C-type lectin domain) with alpha-IIb/beta3 integrin ITGA2B:ITGB3 and alpha-V/beta-3 integrin ITGAV:ITGB3. Interacts with alpha5/beta1 integrin ITGA5:ITGB1 and alpha4/beta1 integrin ITGA4:ITGB. In terms of tissue distribution, not detected in the absence of exposure to lipopolysaccharide (LPS). Detected only after exposure to lipopolysaccharide (LPS) in the tissues examined: spleen, lung, brain, liver, heart, kidney, thymus and small intestine.

It is found in the cell membrane. Ca(2+)-dependent receptor for myeloid cells that binds to carbohydrates on neutrophils and monocytes. Mediates the interaction of activated endothelial cells or platelets with leukocytes. The ligand recognized is sialyl-Lewis X. Mediates rapid rolling of leukocyte rolling over vascular surfaces during the initial steps in inflammation through interaction with SELPLG. Mediates cell-cell interactions and cell adhesion via the interaction with integrin alpha-IIb/beta3 (ITGA2B:ITGB3) and integrin alpha-V/beta-3 (ITGAV:ITGB3). The polypeptide is P-selectin (Selp) (Rattus norvegicus (Rat)).